The primary structure comprises 568 residues: Urocanate hydratase (568 aa).

Residues 58 to 59 (GG), Q136, 182 to 184 (GMG), E202, R207, 248 to 249 (NA), 269 to 273 (QTSAH), 279 to 280 (YL), and Y328 each bind NAD(+). C416 is an active-site residue. Residue G498 participates in NAD(+) binding.

The protein belongs to the urocanase family. NAD(+) serves as cofactor.

It localises to the cytoplasm. It catalyses the reaction 4-imidazolone-5-propanoate = trans-urocanate + H2O. It functions in the pathway amino-acid degradation; L-histidine degradation into L-glutamate; N-formimidoyl-L-glutamate from L-histidine: step 2/3. Functionally, catalyzes the conversion of urocanate to 4-imidazolone-5-propionate. In Photobacterium profundum (strain SS9), this protein is Urocanate hydratase.